The sequence spans 77 residues: Large ribosomal subunit protein uL29 (77 aa).

The protein belongs to the universal ribosomal protein uL29 family.

The chain is Large ribosomal subunit protein uL29 from Mycolicibacterium smegmatis (strain ATCC 700084 / mc(2)155) (Mycobacterium smegmatis).